A 1166-amino-acid chain; its full sequence is ATP-dependent helicase/deoxyribonuclease subunit B (1166 aa).

Residues 1-285 form the UvrD-like helicase ATP-binding domain; it reads MGAVFLSGRS…VRLEETKRHR (285 aa). ATP is bound at residue 8-15; that stretch reads GRSGSGKT. The region spanning 279 to 586 is the UvrD-like helicase C-terminal domain; it reads EETKRHRHHP…KFALIPPALD (308 aa). Cys-801, Cys-1121, Cys-1124, and Cys-1130 together coordinate [4Fe-4S] cluster.

This sequence belongs to the helicase family. AddB/RexB type 1 subfamily. Heterodimer of AddA and AddB. It depends on Mg(2+) as a cofactor. Requires [4Fe-4S] cluster as cofactor.

The heterodimer acts as both an ATP-dependent DNA helicase and an ATP-dependent, dual-direction single-stranded exonuclease. Recognizes the chi site generating a DNA molecule suitable for the initiation of homologous recombination. The AddB subunit has 5' -&gt; 3' nuclease activity but not helicase activity. The protein is ATP-dependent helicase/deoxyribonuclease subunit B of Bacillus licheniformis (strain ATCC 14580 / DSM 13 / JCM 2505 / CCUG 7422 / NBRC 12200 / NCIMB 9375 / NCTC 10341 / NRRL NRS-1264 / Gibson 46).